We begin with the raw amino-acid sequence, 331 residues long: GTPase Obg (331 aa).

The 159-residue stretch at Met-1–Leu-159 folds into the Obg domain. The OBG-type G domain maps to Ser-160–Lys-327. Residues Gly-166–Ser-173, Phe-191–Val-195, Asp-212–Gly-215, Asn-279–Asp-282, and Ser-308–Tyr-310 contribute to the GTP site. Residues Ser-173 and Thr-193 each contribute to the Mg(2+) site.

It belongs to the TRAFAC class OBG-HflX-like GTPase superfamily. OBG GTPase family. Monomer. The cofactor is Mg(2+).

It localises to the cytoplasm. An essential GTPase which binds GTP, GDP and possibly (p)ppGpp with moderate affinity, with high nucleotide exchange rates and a fairly low GTP hydrolysis rate. Plays a role in control of the cell cycle, stress response, ribosome biogenesis and in those bacteria that undergo differentiation, in morphogenesis control. This Rickettsia prowazekii (strain Madrid E) protein is GTPase Obg.